Here is a 274-residue protein sequence, read N- to C-terminus: Rhamnulose-1-phosphate aldolase (274 aa).

Glu117 is an active-site residue. His141, His143, and His212 together coordinate Zn(2+).

It belongs to the aldolase class II family. RhaD subfamily. In terms of assembly, homotetramer. Zn(2+) serves as cofactor.

Its subcellular location is the cytoplasm. It carries out the reaction L-rhamnulose 1-phosphate = (S)-lactaldehyde + dihydroxyacetone phosphate. It participates in carbohydrate degradation; L-rhamnose degradation; glycerone phosphate from L-rhamnose: step 3/3. Catalyzes the reversible cleavage of L-rhamnulose-1-phosphate to dihydroxyacetone phosphate (DHAP) and L-lactaldehyde. The sequence is that of Rhamnulose-1-phosphate aldolase from Shigella sonnei (strain Ss046).